The chain runs to 387 residues: Phosphoglycerate kinase (387 aa).

Residues 21–23, Arg36, 59–62, Arg113, and Arg146 each bind substrate; these read DLN and HLGR. ATP contacts are provided by residues Lys197, Glu314, and 340–343; that span reads GGDT.

Belongs to the phosphoglycerate kinase family. Monomer.

The protein localises to the cytoplasm. The catalysed reaction is (2R)-3-phosphoglycerate + ATP = (2R)-3-phospho-glyceroyl phosphate + ADP. It participates in carbohydrate degradation; glycolysis; pyruvate from D-glyceraldehyde 3-phosphate: step 2/5. This is Phosphoglycerate kinase (pgk) from Pasteurella multocida (strain Pm70).